The primary structure comprises 131 residues: Aspartate 1-decarboxylase (131 aa).

The active-site Schiff-base intermediate with substrate; via pyruvic acid is Ser25. The residue at position 25 (Ser25) is a Pyruvic acid (Ser). Residue Thr57 participates in substrate binding. The active-site Proton donor is the Tyr58. A substrate-binding site is contributed by Gly73–Ala75.

The protein belongs to the PanD family. In terms of assembly, heterooctamer of four alpha and four beta subunits. It depends on pyruvate as a cofactor. Post-translationally, is synthesized initially as an inactive proenzyme, which is activated by self-cleavage at a specific serine bond to produce a beta-subunit with a hydroxyl group at its C-terminus and an alpha-subunit with a pyruvoyl group at its N-terminus.

Its subcellular location is the cytoplasm. The catalysed reaction is L-aspartate + H(+) = beta-alanine + CO2. It participates in cofactor biosynthesis; (R)-pantothenate biosynthesis; beta-alanine from L-aspartate: step 1/1. Functionally, catalyzes the pyruvoyl-dependent decarboxylation of aspartate to produce beta-alanine. This chain is Aspartate 1-decarboxylase, found in Anaeromyxobacter sp. (strain Fw109-5).